The chain runs to 101 residues: Large ribosomal subunit protein eL31 (101 aa).

Belongs to the eukaryotic ribosomal protein eL31 family.

This chain is Large ribosomal subunit protein eL31, found in Ignicoccus hospitalis (strain KIN4/I / DSM 18386 / JCM 14125).